A 142-amino-acid chain; its full sequence is Large ribosomal subunit protein uL13 (142 aa).

This sequence belongs to the universal ribosomal protein uL13 family. In terms of assembly, part of the 50S ribosomal subunit.

In terms of biological role, this protein is one of the early assembly proteins of the 50S ribosomal subunit, although it is not seen to bind rRNA by itself. It is important during the early stages of 50S assembly. In Desulfotalea psychrophila (strain LSv54 / DSM 12343), this protein is Large ribosomal subunit protein uL13.